The following is a 701-amino-acid chain: Sulfate anion transporter 1 (701 aa).

Residues 1–20 (MDESPEPLQQGRGPVPVRRQ) form a disordered region. Transmembrane regions (helical) follow at residues 68-90 (YLAG…AIAY) and 94-116 (AGLQ…FLMG). N-linked (GlcNAc...) asparagine glycans are attached at residues N158 and N163. 7 helical membrane passes run 176 to 198 (YAIR…MGVL), 255 to 277 (GAGQ…LLAA), 290 to 309 (VPLP…SHFG), 342 to 364 (ALDA…EMFA), 377 to 399 (LLAV…SAAL), 412 to 434 (TQLS…APLF), and 472 to 494 (LVWA…LAGV). One can recognise an STAS domain in the interval 527 to 687 (EFEGLVPEPG…LSVHDAVQTA (161 aa)).

This sequence belongs to the SLC26A/SulP transporter (TC 2.A.53) family. As to expression, expressed most abundantly in the kidney and liver, with lower levels in the pancreas, testis, brain, small intestine, colon, and lung.

It localises to the cell membrane. Its subcellular location is the basolateral cell membrane. It carries out the reaction thiosulfate(in) + sulfate(out) = thiosulfate(out) + sulfate(in). The enzyme catalyses 2 hydrogencarbonate(out) + sulfate(in) = 2 hydrogencarbonate(in) + sulfate(out). The catalysed reaction is oxalate(in) + sulfate(out) = oxalate(out) + sulfate(in). It catalyses the reaction oxalate(in) + 2 hydrogencarbonate(out) = oxalate(out) + 2 hydrogencarbonate(in). In terms of biological role, sodium-independent sulfate anion transporter. Can transport other anions including bicarbonate, thiosulfate and oxalate by mediating sulfate-thiosulfate, sulfate-hydrogencarbonate and sulfate-oxalate anion exchange. Mediates oxalate-hydrogencarbonate anion exchange. This chain is Sulfate anion transporter 1 (SLC26A1), found in Homo sapiens (Human).